A 431-amino-acid polypeptide reads, in one-letter code: Interleukin-11 receptor subunit alpha (431 aa).

Residues Met-1–Ser-23 form the signal peptide. Residues Thr-24–Ala-371 are Extracellular-facing. The region spanning Pro-27–Gly-110 is the Ig-like C2-type domain. Intrachain disulfides connect Cys-48/Cys-94, Cys-120/Cys-130, and Cys-170/Cys-180. 2 Fibronectin type-III domains span residues Pro-112–Asp-219 and Pro-220–Thr-317. Residue Asn-127 is glycosylated (N-linked (GlcNAc...) asparagine). The disordered stretch occupies residues Lys-151–Cys-170. The N-linked (GlcNAc...) asparagine glycan is linked to Asn-194. Positions Trp-304–Ser-308 match the WSXWS motif motif. Residues Glu-310–His-360 are disordered. The segment covering Leu-320–Leu-335 has biased composition (basic and acidic residues). Residues Pro-344–Pro-355 show a composition bias toward pro residues. A helical membrane pass occupies residues Ser-372 to Leu-392. Residues Arg-393–Ser-431 are Cytoplasmic-facing. A disordered region spans residues Pro-402–Ser-431.

This sequence belongs to the type I cytokine receptor family. Type 3 subfamily. On IL11 binding, forms a multimer complex with IL6ST/gp130. In terms of processing, a short soluble form is also released from the membrane by proteolysis. The sIL11RA is formed either by limited proteolysis of membrane-bound receptors, a process referred to as ectodomain shedding, or directly secreted from the cells after alternative mRNA splicing. mIL11RA is cleaved by the proteases ADAM10, ELANE and PRTN3.

It localises to the membrane. The protein resides in the secreted. Its function is as follows. Receptor for interleukin-11 (IL11). The receptor systems for IL6, LIF, OSM, CNTF, IL11 and CT1 can utilize IL6ST for initiating signal transmission. The IL11/IL11RA/IL6ST complex may be involved in the control of proliferation and/or differentiation of skeletogenic progenitor or other mesenchymal cells. Essential for the normal development of craniofacial bones and teeth. Restricts suture fusion and tooth number. Functionally, soluble form of IL11 receptor (sIL11RA) that acts as an agonist of IL11 activity. The IL11:sIL11RA complex binds to IL6ST/gp130 on cell surfaces and induces signaling also on cells that do not express membrane-bound IL11RA in a process called IL11 trans-signaling. This is Interleukin-11 receptor subunit alpha from Rattus norvegicus (Rat).